Consider the following 170-residue polypeptide: Lipoprotein signal peptidase (170 aa).

The next 3 helical transmembrane spans lie at Ile9–Val29, Leu72–Glu92, and Thr93–Ile113. Catalysis depends on residues Asp124 and Asp146. The helical transmembrane segment at Phe142–Phe162 threads the bilayer.

The protein belongs to the peptidase A8 family.

It localises to the cell inner membrane. It carries out the reaction Release of signal peptides from bacterial membrane prolipoproteins. Hydrolyzes -Xaa-Yaa-Zaa-|-(S,diacylglyceryl)Cys-, in which Xaa is hydrophobic (preferably Leu), and Yaa (Ala or Ser) and Zaa (Gly or Ala) have small, neutral side chains.. Its pathway is protein modification; lipoprotein biosynthesis (signal peptide cleavage). Functionally, this protein specifically catalyzes the removal of signal peptides from prolipoproteins. The polypeptide is Lipoprotein signal peptidase (Borrelia hermsii (strain HS1 / DAH)).